Consider the following 423-residue polypeptide: Zinc finger protein Gfi-1 (423 aa).

The tract at residues 1 to 20 is SNAG domain; the sequence is MPRSFLVKSKKAHSYHQPRS. Residues 1–76 form a disordered region; it reads MPRSFLVKSK…DRASASPNSC (76 aa). Ser20 and Ser57 each carry phosphoserine. The span at 48–57 shows a compositional bias: basic and acidic residues; sequence SKMEPRERLS. Residues 141-258 are required for interaction with RELA; it reads RQCSALERSA…LLLGGGSYKC (118 aa). 6 consecutive C2H2-type zinc fingers follow at residues 256–279, 285–307, 313–335, 341–363, 369–391, and 397–420; these read YKCI…RRSH, FACE…KAVH, FDCK…LLIH, YPCQ…TFIH, HKCQ…SRKH, and FGCD…ETQH.

In terms of assembly, interacts (via the zinc-finger domain) with ARIH2; the interaction prevents GFI1 ubiquitination and proteasomal degradation. Forms a complex with EHMT2 and HDAC1 to promote 'Lys-9' dimethylation of H3 (H3K9Me2) and repress expression of target genes. Interacts directly with EHMT2. Interacts with RUNX1T1; the interaction represses HDAC-mediated transcriptional activity. Interacts (via the C-terminal zinc fingers) with ZBTB17; the interaction results in the recruitment of GFI1 to the CDKN1A/p21 and CDKNIB promoters and repression of transcription. Interacts with U2AF1L4. Component of RCOR-GFI-KDM1A-HDAC complexes. Interacts directly with RCOR1, KDM1A and HDAC2. Also interacts with HDAC1. Component of the GFI1-AJUBA-HDAC1 repressor complex. Interacts directly with AJUBA (via its LIM domains); the interaction results in the HDAC-dependent corepression of a subset of GFI1 target genes and, occurs independently of the SNAG domain. Interacts with SPI1; the interaction inhibits SPI1 transcriptional activity targeted at macrophage-specific genes, repressing macrophage differentiation of myeloid progenitor cells and promoting granulocyte commitment. Interacts with PIAS3; the interaction relieves the inhibitory effect of PIAS3 on STAT3-mediated transcriptional activity. Interacts with RELA; the interaction occurs on liposaccharide (LPS) stimulation and controls RELA DNA binding activity and regulates endotoxin-mediated TOLL-like receptor inflammatory response. Post-translationally, ubiquitinated.

Its subcellular location is the nucleus. Its function is as follows. Transcription repressor essential for hematopoiesis. Functions in a cell-context and development-specific manner. Binds to 5'-TAAATCAC[AT]GCA-3' in the promoter region of a large number of genes. Component of several complexes, including the EHMT2-GFI1-HDAC1, AJUBA-GFI1-HDAC1 and RCOR-GFI-KDM1A-HDAC complexes, that suppress, via histone deacetylase (HDAC) recruitment, a number of genes implicated in multilineage blood cell development. Regulates neutrophil differentiation, promotes proliferation of lymphoid cells, and is required for granulocyte development. Inhibits SPI1 transcriptional activity at macrophage-specific genes, repressing macrophage differentiation of myeloid progenitor cells and promoting granulocyte commitment. Mediates, together with U2AF1L4, the alternative splicing of CD45 and controls T-cell receptor signaling. Regulates the endotoxin-mediated Toll-like receptor (TLR) inflammatory response by antagonizing RELA. Cooperates with CBFA2T2 to regulate ITGB1-dependent neurite growth. Controls cell-cycle progression by repressing CDKNIA/p21 transcription in response to TGFB1 via recruitment of GFI1 by ZBTB17 to the CDKNIA/p21 and CDKNIB promoters. Required for the maintenance of inner ear hair cells. In addition to its role in transcription, acts as a substrate adapter for PRMT1 in the DNA damage response. Facilitates the recognition of TP53BP1 and MRE11 substrates by PRMT1, promoting their methylation and the DNA damage response. The chain is Zinc finger protein Gfi-1 (Gfi1) from Mus musculus (Mouse).